The sequence spans 135 residues: Prostate and breast cancer overexpressed gene 1 protein (135 aa).

As to expression, expressed in colon, prostate, small intestine, testis and spleen, with lower expression in thymus, ovary, and peripheral blood leukocytes. Up-regulated expression in prostate, breast, and bladder cancer, but not in lung and colon cancer.

It localises to the cytoplasm. Its subcellular location is the nucleus. This Homo sapiens (Human) protein is Prostate and breast cancer overexpressed gene 1 protein (PBOV1).